The chain runs to 354 residues: Serum paraoxonase/lactonase 3 (354 aa).

A disulfide bridge connects residues Cys42 and Cys352. N-linked (GlcNAc...) asparagine glycosylation is present at Asn50. Ca(2+)-binding residues include Glu53 and Asp54. Residue His114 is the Proton acceptor of the active site. Ile116 provides a ligand contact to Ca(2+). Residue Ser165 is modified to Phosphoserine. Asn167, Asn168, Asn223, Asp268, and Asn269 together coordinate Ca(2+). N-linked (GlcNAc...) asparagine glycosylation occurs at Asn269.

This sequence belongs to the paraoxonase family. In terms of assembly, homodimer. The cofactor is Ca(2+). In terms of processing, glycosylated. Post-translationally, the signal sequence is not cleaved.

The protein localises to the secreted. Its subcellular location is the extracellular space. It carries out the reaction a phenyl acetate + H2O = a phenol + acetate + H(+). The catalysed reaction is An aryl dialkyl phosphate + H2O = dialkyl phosphate + an aryl alcohol.. The enzyme catalyses an N-acyl-L-homoserine lactone + H2O = an N-acyl-L-homoserine + H(+). In terms of biological role, has low activity towards the organophosphate paraxon and aromatic carboxylic acid esters. Rapidly hydrolyzes lactones such as statin prodrugs (e.g. lovastatin). Hydrolyzes aromatic lactones and 5- or 6-member ring lactones with aliphatic substituents but not simple lactones or those with polar substituents. This chain is Serum paraoxonase/lactonase 3 (PON3), found in Oryctolagus cuniculus (Rabbit).